Reading from the N-terminus, the 395-residue chain is Probable nitrate/nitrite transporter NarK2 (395 aa).

12 helical membrane passes run 8 to 28, 45 to 65, 72 to 92, 98 to 118, 131 to 151, 157 to 177, 205 to 225, 244 to 266, 274 to 294, 301 to 321, 333 to 353, and 365 to 385; these read LVLATWISVVNFWAWNLIGPL, LLVATPILVGALGRIVTGPLT, AMLIAVTLASILPVLAVGVAA, ALLVFFGLFLGVAGTIFAVGI, GFSTGVFGMGMVGTALSAFFT, WFGLFTTHAIVAAALASTAVV, LPVTWEMSFLYAIVFGGFVAF, AGARTAGFALAAVLARPVGGWLS, VVLASLAGTALLAFAAALQPP, ATFITLAVCLGVGTGGVFAWV, VTGIVAAAGGLGGYFPPLVMG, and VGLLLLVATALVACTYTALHA.

The protein belongs to the major facilitator superfamily. Nitrate/nitrite porter (TC 2.A.1.8) family.

Its subcellular location is the cell membrane. In terms of biological role, involved in excretion of nitrite produced by the dissimilatory reduction of nitrate. The chain is Probable nitrate/nitrite transporter NarK2 (narK2) from Mycobacterium tuberculosis (strain CDC 1551 / Oshkosh).